Reading from the N-terminus, the 46-residue chain is Light-harvesting protein B-800/850 beta 1 chain (46 aa).

The Cytoplasmic segment spans residues 2–19; sequence AERSLSGLTEEEAIAVHD. 2 residues coordinate a bacteriochlorophyll: His-18 and His-36. A helical membrane pass occupies residues 20–42; the sequence is QFKTTFSAFIILAAVAHVLVWVW. At 43–46 the chain is on the periplasmic side; it reads KPWF.

This sequence belongs to the antenna complex beta subunit family. The core complex is formed by different alpha and beta chains, binding bacteriochlorophyll molecules, and arranged most probably in tetrameric structures disposed around the reaction center.

It is found in the cell inner membrane. Its function is as follows. Antenna complexes are light-harvesting systems, which transfer the excitation energy to the reaction centers. This chain is Light-harvesting protein B-800/850 beta 1 chain (B1), found in Magnetospirillum molischianum (Rhodospirillum molischianum).